The primary structure comprises 447 residues: Tubulin beta-1 chain (447 aa).

GTP is bound by residues Q11, E69, S138, G142, T143, G144, N204, and N226. Mg(2+) is bound at residue E69. Residues 411 to 427 (AESNMNDLVSEYQQYQD) are compositionally biased toward polar residues. Positions 411 to 447 (AESNMNDLVSEYQQYQDATADEEGDYEDEEEQVPEDE) are disordered. Residues 429–447 (TADEEGDYEDEEEQVPEDE) show a composition bias toward acidic residues.

This sequence belongs to the tubulin family. As to quaternary structure, dimer of alpha and beta chains. A typical microtubule is a hollow water-filled tube with an outer diameter of 25 nm and an inner diameter of 15 nM. Alpha-beta heterodimers associate head-to-tail to form protofilaments running lengthwise along the microtubule wall with the beta-tubulin subunit facing the microtubule plus end conferring a structural polarity. Microtubules usually have 13 protofilaments but different protofilament numbers can be found in some organisms and specialized cells. Mg(2+) serves as cofactor. As to expression, expressed in leaf sheaths.

The protein localises to the cytoplasm. It is found in the cytoskeleton. Functionally, tubulin is the major constituent of microtubules, a cylinder consisting of laterally associated linear protofilaments composed of alpha- and beta-tubulin heterodimers. Microtubules grow by the addition of GTP-tubulin dimers to the microtubule end, where a stabilizing cap forms. Below the cap, tubulin dimers are in GDP-bound state, owing to GTPase activity of alpha-tubulin. This chain is Tubulin beta-1 chain (TUBB1), found in Oryza sativa subsp. japonica (Rice).